The primary structure comprises 65 residues: Diapause-specific peptide (65 aa).

Residues 1 to 24 form the signal peptide; sequence MGAALKMTIFLLIVACAMIATTEA. 3 cysteine pairs are disulfide-bonded: Cys31–Cys45, Cys35–Cys57, and Cys46–Cys64.

Highly expressed in the fat body.

It localises to the secreted. Its function is as follows. Has antifungal activity against T.rubrum. Blocks voltage-dependent N-type calcium channels (Cav2.2 / CACNA1B). This is Diapause-specific peptide from Gastrophysa atrocyanea (Leaf beetle).